A 260-amino-acid chain; its full sequence is Indole-3-glycerol phosphate synthase (260 aa).

The protein belongs to the TrpC family.

It carries out the reaction 1-(2-carboxyphenylamino)-1-deoxy-D-ribulose 5-phosphate + H(+) = (1S,2R)-1-C-(indol-3-yl)glycerol 3-phosphate + CO2 + H2O. Its pathway is amino-acid biosynthesis; L-tryptophan biosynthesis; L-tryptophan from chorismate: step 4/5. The sequence is that of Indole-3-glycerol phosphate synthase from Ruminiclostridium cellulolyticum (strain ATCC 35319 / DSM 5812 / JCM 6584 / H10) (Clostridium cellulolyticum).